The chain runs to 421 residues: N-succinylarginine dihydrolase (421 aa).

Substrate-binding positions include 19-28, N105, and 132-133; these read AGLSLGNLAS and HR. E167 is an active-site residue. A substrate-binding site is contributed by R199. Residue H235 is part of the active site. Substrate contacts are provided by D237 and N346. The Nucleophile role is filled by C352.

This sequence belongs to the succinylarginine dihydrolase family. As to quaternary structure, homodimer.

The catalysed reaction is N(2)-succinyl-L-arginine + 2 H2O + 2 H(+) = N(2)-succinyl-L-ornithine + 2 NH4(+) + CO2. Its pathway is amino-acid degradation; L-arginine degradation via AST pathway; L-glutamate and succinate from L-arginine: step 2/5. In terms of biological role, catalyzes the hydrolysis of N(2)-succinylarginine into N(2)-succinylornithine, ammonia and CO(2). In Novosphingobium aromaticivorans (strain ATCC 700278 / DSM 12444 / CCUG 56034 / CIP 105152 / NBRC 16084 / F199), this protein is N-succinylarginine dihydrolase.